The following is a 441-amino-acid chain: ATP-dependent protease ATPase subunit HslU (441 aa).

Residues Ile-18, 60–65 (GVGKTE), Asp-254, Glu-319, and Arg-391 each bind ATP.

The protein belongs to the ClpX chaperone family. HslU subfamily. A double ring-shaped homohexamer of HslV is capped on each side by a ring-shaped HslU homohexamer. The assembly of the HslU/HslV complex is dependent on binding of ATP.

The protein resides in the cytoplasm. Its function is as follows. ATPase subunit of a proteasome-like degradation complex; this subunit has chaperone activity. The binding of ATP and its subsequent hydrolysis by HslU are essential for unfolding of protein substrates subsequently hydrolyzed by HslV. HslU recognizes the N-terminal part of its protein substrates and unfolds these before they are guided to HslV for hydrolysis. In Shewanella denitrificans (strain OS217 / ATCC BAA-1090 / DSM 15013), this protein is ATP-dependent protease ATPase subunit HslU.